Consider the following 369-residue polypeptide: tRNA/tmRNA (uracil-C(5))-methyltransferase (369 aa).

Residues Q190, Y218, N223, E239, and D301 each coordinate S-adenosyl-L-methionine. Residue C326 is the Nucleophile of the active site. Residue E360 is the Proton acceptor of the active site.

Belongs to the class I-like SAM-binding methyltransferase superfamily. RNA M5U methyltransferase family. TrmA subfamily.

The catalysed reaction is uridine(54) in tRNA + S-adenosyl-L-methionine = 5-methyluridine(54) in tRNA + S-adenosyl-L-homocysteine + H(+). It catalyses the reaction uridine(341) in tmRNA + S-adenosyl-L-methionine = 5-methyluridine(341) in tmRNA + S-adenosyl-L-homocysteine + H(+). In terms of biological role, dual-specificity methyltransferase that catalyzes the formation of 5-methyluridine at position 54 (m5U54) in all tRNAs, and that of position 341 (m5U341) in tmRNA (transfer-mRNA). This Vibrio atlanticus (strain LGP32) (Vibrio splendidus (strain Mel32)) protein is tRNA/tmRNA (uracil-C(5))-methyltransferase.